The sequence spans 220 residues: Thiopurine S-methyltransferase (220 aa).

W10, L45, E66, and R123 together coordinate S-adenosyl-L-methionine.

The protein belongs to the class I-like SAM-binding methyltransferase superfamily. TPMT family.

The protein localises to the cytoplasm. It catalyses the reaction S-adenosyl-L-methionine + a thiopurine = S-adenosyl-L-homocysteine + a thiopurine S-methylether.. This chain is Thiopurine S-methyltransferase, found in Nitrosomonas eutropha (strain DSM 101675 / C91 / Nm57).